The following is a 422-amino-acid chain: MLYYLFEWLHKLNFPGAGMFGYTSFRALMAVILALLISSIWGDKFINLLKKKQITETQRDAKTDPFGVNKVGVPSMGGVIIIVAILIPCLLLGKLDNIYMILMLITTVWLGSLGFADDYIKIFKKDKEGLHGKFKIIGQVGLGLIVGLTLYLSPDVVIRENIEVHTPGQEMEVIHGTNDLKSTQTTIPFFKSNNLDYADLVGFMGEHAQTAGWFLFVIITIFVVTAVSNGANLNDGMDGMAAGNSAIIGATLGILAYVSSHIEFASYLNIMYIPGSEELVIYICAFIGALIGFLWYNAYPAQVFMGDTGSLTIGGIIAVFAIIIHKELLIPILCGVFLVENLSVILQRFYYKIGKRKGVKQRLFKRTPIHDHFRTSMSLVEPGCTVKFTKPDQLFHESKITVRFWIVTIVLAAITIITLKIR.

A run of 9 helical transmembrane segments spans residues 28–48 (LMAV…FINL), 71–91 (VGVP…PCLL), 95–115 (LDNI…SLGF), 136–156 (IIGQ…SPDV), 211–231 (AGWF…SNGA), 239–259 (GMAA…AYVS), 279–299 (LVIY…YNAY), 313–333 (IGGI…IPIL), and 399–419 (KITV…IITL).

It belongs to the glycosyltransferase 4 family. MraY subfamily. Mg(2+) serves as cofactor.

The protein localises to the cell inner membrane. The enzyme catalyses UDP-N-acetyl-alpha-D-muramoyl-L-alanyl-gamma-D-glutamyl-meso-2,6-diaminopimeloyl-D-alanyl-D-alanine + di-trans,octa-cis-undecaprenyl phosphate = di-trans,octa-cis-undecaprenyl diphospho-N-acetyl-alpha-D-muramoyl-L-alanyl-D-glutamyl-meso-2,6-diaminopimeloyl-D-alanyl-D-alanine + UMP. It participates in cell wall biogenesis; peptidoglycan biosynthesis. In terms of biological role, catalyzes the initial step of the lipid cycle reactions in the biosynthesis of the cell wall peptidoglycan: transfers peptidoglycan precursor phospho-MurNAc-pentapeptide from UDP-MurNAc-pentapeptide onto the lipid carrier undecaprenyl phosphate, yielding undecaprenyl-pyrophosphoryl-MurNAc-pentapeptide, known as lipid I. This Bacteroides thetaiotaomicron (strain ATCC 29148 / DSM 2079 / JCM 5827 / CCUG 10774 / NCTC 10582 / VPI-5482 / E50) protein is Phospho-N-acetylmuramoyl-pentapeptide-transferase.